The primary structure comprises 213 residues: Probable transaldolase (213 aa).

Lys-83 serves as the catalytic Schiff-base intermediate with substrate.

The protein belongs to the transaldolase family. Type 3B subfamily.

It localises to the cytoplasm. It catalyses the reaction D-sedoheptulose 7-phosphate + D-glyceraldehyde 3-phosphate = D-erythrose 4-phosphate + beta-D-fructose 6-phosphate. It participates in carbohydrate degradation; pentose phosphate pathway; D-glyceraldehyde 3-phosphate and beta-D-fructose 6-phosphate from D-ribose 5-phosphate and D-xylulose 5-phosphate (non-oxidative stage): step 2/3. Transaldolase is important for the balance of metabolites in the pentose-phosphate pathway. This is Probable transaldolase from Geobacillus thermodenitrificans (strain NG80-2).